The following is a 681-amino-acid chain: Probable L-type lectin-domain containing receptor kinase VII.2 (681 aa).

The N-terminal stretch at 1-23 (MFSKVSILLFSLASLLLFRSTTG) is a signal peptide. The tract at residues 24–260 (IEFIYNSNFT…SHRILSWSFS (237 aa)) is legume-lectin like. Residues 24-290 (IEFIYNSNFT…SGDSVLKSKG (267 aa)) are Extracellular-facing. Asparagine 31, asparagine 42, asparagine 56, asparagine 72, asparagine 126, asparagine 202, asparagine 207, asparagine 228, and asparagine 263 each carry an N-linked (GlcNAc...) asparagine glycan. The chain crosses the membrane as a helical span at residues 291–311 (FIAGVSSGVVLLVSVIGLLCF). At 312–681 (YVVRRRRQRL…QTYDSILHGR (370 aa)) the chain is on the cytoplasmic side. One can recognise a Protein kinase domain in the interval 349–624 (FSDENMIGYG…VVQILEQGRL (276 aa)). Residues 355–363 (IGYGGNSKV) and lysine 376 each bind ATP. The active-site Proton acceptor is aspartate 475.

It in the C-terminal section; belongs to the protein kinase superfamily. Ser/Thr protein kinase family. The protein in the N-terminal section; belongs to the leguminous lectin family.

It is found in the cell membrane. The enzyme catalyses L-seryl-[protein] + ATP = O-phospho-L-seryl-[protein] + ADP + H(+). The catalysed reaction is L-threonyl-[protein] + ATP = O-phospho-L-threonyl-[protein] + ADP + H(+). In Arabidopsis thaliana (Mouse-ear cress), this protein is Probable L-type lectin-domain containing receptor kinase VII.2 (LECRK72).